We begin with the raw amino-acid sequence, 342 residues long: Protein RecA (342 aa).

This sequence belongs to the RecA family.

Its subcellular location is the cytoplasm. Its function is as follows. Can catalyze the hydrolysis of ATP in the presence of single-stranded DNA, the ATP-dependent uptake of single-stranded DNA by duplex DNA, and the ATP-dependent hybridization of homologous single-stranded DNAs. It interacts with LexA causing its activation and leading to its autocatalytic cleavage. In Pectobacterium carotovorum (Erwinia carotovora), this protein is Protein RecA.